A 604-amino-acid chain; its full sequence is MRMTVVKHVMLTLICGTLSWGVQINTLAYASAIKSEDGFDMDEDGVYGDDIQDYINAAYTHERPFIQDKSKHKMETYTQSLLHTDLETDSQISRERGNYINAQELGDGNNEHVDLVNRTMTKNVLMKHGHRNFMDASILYKSVHGITHLHAHQRPTEVSVAENQQLLLKVHIPQENEHTYTERWSFLPAAPCKLTPPSIQQVCIKHGACIHDVVVDVDCIAESMEHTLVEIGYVVHASKAVHPTWTVVNITEDFANYGFDTPDVKPGVLKFEHMNAHHAGVYIWNLQGTHGENMYVTFLVKLNNSIENHIDLPAVTPKPKGAEFHTWHYHSHVFSVGETFSLPMHLQYKIHDTPFDLLLEWLYVPINPTCQPMRLYSACVYHETVPSCLSPENPECTFASPHIARRVANTVYQNCEHVNYTADCLAVSHVEPGSGLEIQNGGSALLFVNAAESMSGLYVFIIHFNGHVETVAYTVVSTIENFVNAIEEHGFPPEIHNVPSPSSPNVTANNDVISETNTFPFKTYAGITGGFAVLALVCLALALVCTKRKFGHRSYWSDKAAYGQSTYYAGVPVDDFEDDTEVEVDEGAECGGSGYTVYIDKRTR.

A signal peptide spans 1-24 (MRMTVVKHVMLTLICGTLSWGVQI). Residues 25 to 526 (NTLAYASAIK…NTFPFKTYAG (502 aa)) are Virion surface-facing. N-linked (GlcNAc...) asparagine; by host glycosylation is present at Asn-117. Residues 192–219 (CKLTPPSIQQVCIKHGACIHDVVVDVDC) form an interaction with gI region. N-linked (GlcNAc...) asparagine; by host glycosylation is found at Asn-249 and Asn-303. 3 disulfide bridges follow: Cys-370–Cys-396, Cys-379–Cys-388, and Cys-415–Cys-424. N-linked (GlcNAc...) asparagine; by host glycans are attached at residues Asn-419 and Asn-505. Residues 527–544 (ITGGFAVLALVCLALALV) traverse the membrane as a helical segment. Residues 545–604 (CTKRKFGHRSYWSDKAAYGQSTYYAGVPVDDFEDDTEVEVDEGAECGGSGYTVYIDKRTR) are Intravirion-facing. Positions 568-571 (YAGV) match the Internalization motif motif. The tract at residues 574-586 (DDFEDDTEVEVDE) is acidic.

It belongs to the alphaherpesvirinae glycoprotein E family. As to quaternary structure, interacts with gI. In terms of processing, phosphorylated within the acidic cluster. Phosphorylation determines whether endocytosed viral gE traffics to the trans-Golgi network or recycles to the cell membrane.

The protein resides in the virion membrane. The protein localises to the host cell membrane. It is found in the host cell junction. It localises to the host Golgi apparatus membrane. Its subcellular location is the host endosome membrane. In terms of biological role, in epithelial cells, the heterodimer gE/gI is required for the cell-to-cell spread of the virus, by sorting nascent virions to cell junctions. Once the virus reaches the cell junctions, virus particles can spread to adjacent cells extremely rapidly through interactions with cellular receptors that accumulate at these junctions. Implicated in basolateral spread in polarized cells. In neuronal cells, gE/gI is essential for the anterograde spread of the infection throughout the host nervous system. Together with US9, the heterodimer gE/gI is involved in the sorting and transport of viral structural components toward axon tips. The polypeptide is Envelope glycoprotein E (gE) (Cercopithecine herpesvirus 9 (strain DHV) (CeHV-9)).